A 438-amino-acid chain; its full sequence is 5-methylthioadenosine/S-adenosylhomocysteine deaminase (438 aa).

Positions 71 and 73 each coordinate Zn(2+). 2 residues coordinate substrate: glutamate 100 and histidine 192. Histidine 219 provides a ligand contact to Zn(2+). Substrate is bound by residues glutamate 222 and aspartate 307. Aspartate 307 contacts Zn(2+).

It belongs to the metallo-dependent hydrolases superfamily. MTA/SAH deaminase family. Requires Zn(2+) as cofactor.

It carries out the reaction S-adenosyl-L-homocysteine + H2O + H(+) = S-inosyl-L-homocysteine + NH4(+). The catalysed reaction is S-methyl-5'-thioadenosine + H2O + H(+) = S-methyl-5'-thioinosine + NH4(+). In terms of biological role, catalyzes the deamination of 5-methylthioadenosine and S-adenosyl-L-homocysteine into 5-methylthioinosine and S-inosyl-L-homocysteine, respectively. Is also able to deaminate adenosine. The polypeptide is 5-methylthioadenosine/S-adenosylhomocysteine deaminase (Syntrophobacter fumaroxidans (strain DSM 10017 / MPOB)).